The sequence spans 167 residues: Ribosome-binding factor A (167 aa).

Positions 127-167 (SRANAQYAGDADPYKHDEPDDDDFDDDDDVEVEDWDDDDEA) are disordered. Acidic residues predominate over residues 145 to 167 (PDDDDFDDDDDVEVEDWDDDDEA).

This sequence belongs to the RbfA family. Monomer. Binds 30S ribosomal subunits, but not 50S ribosomal subunits or 70S ribosomes.

The protein localises to the cytoplasm. Functionally, one of several proteins that assist in the late maturation steps of the functional core of the 30S ribosomal subunit. Associates with free 30S ribosomal subunits (but not with 30S subunits that are part of 70S ribosomes or polysomes). Required for efficient processing of 16S rRNA. May interact with the 5'-terminal helix region of 16S rRNA. The polypeptide is Ribosome-binding factor A (Bifidobacterium adolescentis (strain ATCC 15703 / DSM 20083 / NCTC 11814 / E194a)).